The primary structure comprises 286 residues: Protein GrpE (286 aa).

Disordered stretches follow at residues 1–51 and 260–286; these read MSED…ETTA and VAAPKEPDSSETESTSESVSDVQQPTT. 2 stretches are compositionally biased toward low complexity: residues 39–50 and 271–286; these read QPSSTPQTPETT and TESTSESVSDVQQPTT.

It belongs to the GrpE family. As to quaternary structure, homodimer.

It localises to the cytoplasm. In terms of biological role, participates actively in the response to hyperosmotic and heat shock by preventing the aggregation of stress-denatured proteins, in association with DnaK and GrpE. It is the nucleotide exchange factor for DnaK and may function as a thermosensor. Unfolded proteins bind initially to DnaJ; upon interaction with the DnaJ-bound protein, DnaK hydrolyzes its bound ATP, resulting in the formation of a stable complex. GrpE releases ADP from DnaK; ATP binding to DnaK triggers the release of the substrate protein, thus completing the reaction cycle. Several rounds of ATP-dependent interactions between DnaJ, DnaK and GrpE are required for fully efficient folding. The polypeptide is Protein GrpE (Gloeothece citriformis (strain PCC 7424) (Cyanothece sp. (strain PCC 7424))).